Consider the following 695-residue polypeptide: DNA topoisomerase 4 subunit B (695 aa).

Residues 1-53 (MSSSDKIPSLFGDDDALAPVPAAPFKASVEPRVEPTPRPIPPPPPSKTASAPG) form a disordered region. A compositionally biased stretch (pro residues) spans 36 to 46 (TPRPIPPPPPS). ATP contacts are provided by residues tyrosine 55, asparagine 95, aspartate 122, 164–170 (GLHGVGA), and lysine 397. Residues 477–591 (AELFIVEGDS…GGHLFLALPP (115 aa)) enclose the Toprim domain. Mg(2+) is bound by residues glutamate 483, aspartate 556, and aspartate 558.

This sequence belongs to the type II topoisomerase family. ParE type 1 subfamily. As to quaternary structure, heterotetramer composed of ParC and ParE. Requires Mg(2+) as cofactor. It depends on Mn(2+) as a cofactor. Ca(2+) is required as a cofactor.

The enzyme catalyses ATP-dependent breakage, passage and rejoining of double-stranded DNA.. Topoisomerase IV is essential for chromosome segregation. It relaxes supercoiled DNA. Performs the decatenation events required during the replication of a circular DNA molecule. The chain is DNA topoisomerase 4 subunit B from Caulobacter vibrioides (strain ATCC 19089 / CIP 103742 / CB 15) (Caulobacter crescentus).